Consider the following 219-residue polypeptide: UPF0502 protein Gura_3445 (219 aa).

Positions 162 to 181 (AGEPDLPDDTPAPPPEPARQ) are disordered.

Belongs to the UPF0502 family.

This Geotalea uraniireducens (strain Rf4) (Geobacter uraniireducens) protein is UPF0502 protein Gura_3445.